The sequence spans 200 residues: MLAFCRSSLKSKKYFIILLALAAIAGLGTHAAWSSNGLPRIDNKTLARLAQQHPVVVLFRHAERCDRSTNQCLSDKTGITVKGTQDARELGNAFSADIPDFDLYSSNTVRTIQSATWFSAGKKLTVDKRFLQCGNEIYSAIKDLQRKAPDKNIVIFTHNHCLTYIAKDKRDATFKPDYLDGLVMHVEKGKVYLDGEFVNH.

A signal peptide spans 1-25 (MLAFCRSSLKSKKYFIILLALAAIA).

The protein belongs to the phosphoglycerate mutase family. Ais subfamily.

The protein resides in the periplasm. It participates in bacterial outer membrane biogenesis; lipopolysaccharide metabolism. Functionally, catalyzes the dephosphorylation of heptose(II) of the outer membrane lipopolysaccharide core. This is Lipopolysaccharide core heptose(II)-phosphate phosphatase from Escherichia coli O6:H1 (strain CFT073 / ATCC 700928 / UPEC).